The primary structure comprises 260 residues: Triosephosphate isomerase (260 aa).

11 to 13 (NWK) contributes to the substrate binding site. H103 serves as the catalytic Electrophile. The Proton acceptor role is filled by E175. Residues G181, S220, and 241 to 242 (GG) each bind substrate.

Belongs to the triosephosphate isomerase family. In terms of assembly, homodimer.

The protein resides in the cytoplasm. The enzyme catalyses D-glyceraldehyde 3-phosphate = dihydroxyacetone phosphate. It participates in carbohydrate biosynthesis; gluconeogenesis. It functions in the pathway carbohydrate degradation; glycolysis; D-glyceraldehyde 3-phosphate from glycerone phosphate: step 1/1. Involved in the gluconeogenesis. Catalyzes stereospecifically the conversion of dihydroxyacetone phosphate (DHAP) to D-glyceraldehyde-3-phosphate (G3P). In Shewanella amazonensis (strain ATCC BAA-1098 / SB2B), this protein is Triosephosphate isomerase.